The primary structure comprises 291 residues: Phytanoyl-CoA dioxygenase domain-containing protein 1 (291 aa).

Thr-55 is subject to Phosphothreonine. Residues Lys-102, Met-141, 156-158 (HQD), and Trp-174 each bind 2-oxoglutarate. The Fe cation site is built by His-156 and Asp-158. His-246 contacts Fe cation. Ser-248 and Arg-257 together coordinate 2-oxoglutarate.

Belongs to the PhyH family. PHYHD1 subfamily. Requires Fe cation as cofactor.

With respect to regulation, activity is increased by ascorbate. Inhibited by myristoyl-CoA. 2-oxoglutarate(2OG)-dependent dioxygenase that catalyzes the conversion of 2-oxoglutarate to succinate and CO(2) in an iron-dependent manner. However, does not couple 2OG turnover to the hydroxylation of acyl-coenzyme A derivatives, implying that it is not directly involved in phytanoyl coenzyme-A metabolism. Does not show detectable activity towards fatty acid CoA thioesters. Functionally, isoform 2 probably lacks enzyme activity. In terms of biological role, isoform 3 probably lacks enzyme activity. This chain is Phytanoyl-CoA dioxygenase domain-containing protein 1, found in Homo sapiens (Human).